Consider the following 479-residue polypeptide: Aspartyl/glutamyl-tRNA(Asn/Gln) amidotransferase subunit B (479 aa).

This sequence belongs to the GatB/GatE family. GatB subfamily. Heterotrimer of A, B and C subunits.

The enzyme catalyses L-glutamyl-tRNA(Gln) + L-glutamine + ATP + H2O = L-glutaminyl-tRNA(Gln) + L-glutamate + ADP + phosphate + H(+). It catalyses the reaction L-aspartyl-tRNA(Asn) + L-glutamine + ATP + H2O = L-asparaginyl-tRNA(Asn) + L-glutamate + ADP + phosphate + 2 H(+). Its function is as follows. Allows the formation of correctly charged Asn-tRNA(Asn) or Gln-tRNA(Gln) through the transamidation of misacylated Asp-tRNA(Asn) or Glu-tRNA(Gln) in organisms which lack either or both of asparaginyl-tRNA or glutaminyl-tRNA synthetases. The reaction takes place in the presence of glutamine and ATP through an activated phospho-Asp-tRNA(Asn) or phospho-Glu-tRNA(Gln). The chain is Aspartyl/glutamyl-tRNA(Asn/Gln) amidotransferase subunit B from Streptococcus pyogenes serotype M49 (strain NZ131).